The primary structure comprises 251 residues: Isoprenyl transferase (251 aa).

Asp24 is an active-site residue. Residue Asp24 participates in Mg(2+) binding. Substrate-binding positions include 25 to 28 (GNGR), Trp29, Arg37, His41, and 69 to 71 (STE). Asn72 acts as the Proton acceptor in catalysis. Substrate is bound by residues Trp73, Arg75, Arg186, and 192 to 194 (RIS). Glu205 contacts Mg(2+).

Belongs to the UPP synthase family. Homodimer. Requires Mg(2+) as cofactor.

Functionally, catalyzes the condensation of isopentenyl diphosphate (IPP) with allylic pyrophosphates generating different type of terpenoids. The polypeptide is Isoprenyl transferase (Chromobacterium violaceum (strain ATCC 12472 / DSM 30191 / JCM 1249 / CCUG 213 / NBRC 12614 / NCIMB 9131 / NCTC 9757 / MK)).